The chain runs to 155 residues: Small ribosomal subunit protein uS7c (155 aa).

Belongs to the universal ribosomal protein uS7 family. As to quaternary structure, part of the 30S ribosomal subunit.

Its subcellular location is the plastid. The protein resides in the chloroplast. Its function is as follows. One of the primary rRNA binding proteins, it binds directly to 16S rRNA where it nucleates assembly of the head domain of the 30S subunit. The sequence is that of Small ribosomal subunit protein uS7c (rps7) from Silene latifolia (White campion).